We begin with the raw amino-acid sequence, 403 residues long: Large ribosomal subunit protein uL3 (403 aa).

A disordered region spans residues 1–38 (MSHRKFSAPRHGSLGFLPRKRSSRHRGKVKSFPKDDSS). Serine 13 carries the post-translational modification Phosphoserine. A compositionally biased stretch (basic residues) spans 18–31 (PRKRSSRHRGKVKS). Residue lysine 39 forms a Glycyl lysine isopeptide (Lys-Gly) (interchain with G-Cter in SUMO2) linkage. Lysine 136 bears the N6-acetyllysine mark. Residues lysine 224 and lysine 226 each participate in a glycyl lysine isopeptide (Lys-Gly) (interchain with G-Cter in SUMO2) cross-link. A Tele-methylhistidine modification is found at histidine 245. Lysine 286 and lysine 294 each carry N6-acetyllysine; alternate. A Glycyl lysine isopeptide (Lys-Gly) (interchain with G-Cter in SUMO2); alternate cross-link involves residue lysine 286. A Glycyl lysine isopeptide (Lys-Gly) (interchain with G-Cter in SUMO1); alternate cross-link involves residue lysine 294. Serine 304 is modified (phosphoserine). Lysine 366 carries the post-translational modification N6-acetyllysine; alternate. Lysine 366 participates in a covalent cross-link: Glycyl lysine isopeptide (Lys-Gly) (interchain with G-Cter in SUMO2); alternate. Position 373 is an N6-acetyllysine (lysine 373). Residues lysine 386, lysine 393, and lysine 399 each participate in a glycyl lysine isopeptide (Lys-Gly) (interchain with G-Cter in SUMO2) cross-link.

It belongs to the universal ribosomal protein uL3 family. Component of the large ribosomal subunit. Interacts with DHX33. Constitutively monomethylated at His-245 by METTL18. Methylation at His-245 regulates translation elongation by slowing ribosome traversal on tyrosine codons: slower elongation provides enough time for proper folding of synthesized proteins and prevents cellular aggregation of tyrosine-rich proteins It is not required for incorporation of RPL3 into ribosomes.

It localises to the nucleus. Its subcellular location is the nucleolus. It is found in the cytoplasm. Its function is as follows. Component of the large ribosomal subunit. The ribosome is a large ribonucleoprotein complex responsible for the synthesis of proteins in the cell. This Sus scrofa (Pig) protein is Large ribosomal subunit protein uL3 (RPL3).